The sequence spans 377 residues: Lactosylceramide 1,3-N-acetyl-beta-D-glucosaminyltransferase (377 aa).

Residues M1–Q12 are Cytoplasmic-facing. A helical; Signal-anchor for type II membrane protein membrane pass occupies residues F13 to V30. Over Q31–S377 the chain is Lumenal. N-linked (GlcNAc...) asparagine glycosylation is found at N56, N167, and N275.

It belongs to the glycosyltransferase 31 family.

The protein resides in the golgi apparatus membrane. The catalysed reaction is a beta-D-Gal-(1-&gt;4)-beta-D-Glc-(1&lt;-&gt;1)-Cer(d18:1(4E)) + UDP-N-acetyl-alpha-D-glucosamine = a beta-D-GlcNAc-(1-&gt;3)-beta-D-Gal-(1-&gt;4)-beta-D-Glc-(1&lt;-&gt;1)-Cer(d18:1(4E)) + UDP + H(+). It catalyses the reaction a neolactoside nLc4Cer(d18:1(4E)) + UDP-N-acetyl-alpha-D-glucosamine = a neolactoside IV(3)-beta-GlcNAc-nLc4Cer(d18:1(4E)) + UDP + H(+). The protein operates within protein modification; protein glycosylation. Beta-1,3-N-acetylglucosaminyltransferase that plays a key role in the synthesis of lacto- or neolacto-series carbohydrate chains on glycolipids. This chain is Lactosylceramide 1,3-N-acetyl-beta-D-glucosaminyltransferase (b3gnt5), found in Xenopus tropicalis (Western clawed frog).